We begin with the raw amino-acid sequence, 226 residues long: Fibrillarin-like rRNA/tRNA 2'-O-methyltransferase (226 aa).

S-adenosyl-L-methionine-binding positions include 85–86, 104–105, 129–130, and 149–152; these read TT, EF, DA, and DVAQ.

This sequence belongs to the methyltransferase superfamily. Fibrillarin family. Interacts with nop5. Component of box C/D small ribonucleoprotein (sRNP) particles that contain rpl7ae, FlpA and nop5, plus a guide RNA.

Functionally, involved in pre-rRNA and tRNA processing. Utilizes the methyl donor S-adenosyl-L-methionine to catalyze the site-specific 2'-hydroxyl methylation of ribose moieties in rRNA and tRNA. Site specificity is provided by a guide RNA that base pairs with the substrate. Methylation occurs at a characteristic distance from the sequence involved in base pairing with the guide RNA. The chain is Fibrillarin-like rRNA/tRNA 2'-O-methyltransferase from Thermococcus gammatolerans (strain DSM 15229 / JCM 11827 / EJ3).